The following is a 248-amino-acid chain: Oligo(A)/oligo(T)-binding protein (248 aa).

A DNA-binding region spans residues 1 to 36 (MAKTLAQGRKPGSGRKPGKGKTLREGRKPGSGRRRR). Disordered stretches follow at residues 1–127 (MAKT…LQQQ) and 219–248 (TAAS…NATI). 3 consecutive repeat copies span residues 8-12 (GRKPG), 14-18 (GRKPG), and 26-30 (GRKPG). A 3 X 5 AA repeats of G-R-K-P-G region spans residues 8-30 (GRKPGSGRKPGKGKTLREGRKPG). Positions 12–21 (GSGRKPGKGK) are enriched in basic residues. Residues 37 to 71 (QDTGGKETDGSQQDQESRLISSRDMEAVDALRELT) are compositionally biased toward basic and acidic residues. Low complexity-rich tracts occupy residues 72–100 (HSPS…LPPS) and 111–127 (QQQQ…LQQQ).

As to quaternary structure, binds as a dimer or higher oligomer.

DNA-binding protein that recognizes oligo(A).oligo(T) tracts (A.T DNA). Can bind to any 11 bp sequence in which 10 bases conform to an uninterrupted oligo(A).oligo(T) tract. This is Oligo(A)/oligo(T)-binding protein (DAT1) from Saccharomyces cerevisiae (strain ATCC 204508 / S288c) (Baker's yeast).